The sequence spans 446 residues: Tubulin gamma chain (446 aa).

142 to 148 contributes to the GTP binding site; that stretch reads AGGTGSG.

The protein belongs to the tubulin family. Interacts with mto1. Interacts with mto2.

It is found in the cytoplasm. It localises to the cytoskeleton. Its subcellular location is the microtubule organizing center. The protein localises to the spindle pole body. Functionally, tubulin is the major constituent of microtubules. The gamma chain is found at microtubule organizing centers (MTOC) such as the spindle poles or the centrosome, suggesting that it is involved in the minus-end nucleation of microtubule assembly. The protein is Tubulin gamma chain of Schizosaccharomyces pombe (strain 972 / ATCC 24843) (Fission yeast).